The primary structure comprises 53 residues: UPF0391 membrane protein Ent638_0536 (53 aa).

Helical transmembrane passes span 4–24 and 27–47; these read WGIIFLVIALIAAALGFGGLA and AAWAAKLVFVVGIVLFLVSLF.

The protein belongs to the UPF0391 family.

It is found in the cell membrane. The polypeptide is UPF0391 membrane protein Ent638_0536 (Enterobacter sp. (strain 638)).